A 511-amino-acid chain; its full sequence is Acetylcholine receptor subunit alpha-type unc-38 (511 aa).

Residues 1-16 form the signal peptide; that stretch reads MRSFWLFLLLLLFCIS. The Extracellular portion of the chain corresponds to 17-261; the sequence is FIKLTEGNED…QLRRKPLFYT (245 aa). Residue Asn124 is glycosylated (N-linked (GlcNAc...) asparagine). Residues Cys151 and Cys165 are joined by a disulfide bond. Asn202 carries an N-linked (GlcNAc...) asparagine glycan. Cys238 and Cys239 are disulfide-bonded. The next 3 membrane-spanning stretches (helical) occupy residues 262-282, 291-311, and 324-344; these read VNLV…FYLP, LCIS…EIIP, and LLFT…SLNL. The Cytoplasmic segment spans residues 345–464; that stretch reads HFRTPTTHLM…WKYVAMVLDR (120 aa). Residues 465–485 form a helical membrane-spanning segment; that stretch reads LFLLIFSIACFVGTVIILLRA.

Belongs to the ligand-gated ion channel (TC 1.A.9) family. Acetylcholine receptor (TC 1.A.9.1) subfamily. In terms of assembly, component of nicotinic acetylcholine receptor. In muscles, composed of 2 non-alpha subunits lev-1 and unc-29, and 3 alpha subunits unc-38, unc-63 and lev-8. In cholinergic motoneurons, composed of 2 non-alpha subunits acr-2 and acr-3, and 3 alpha subunits unc-38, unc-63 and acr-12.

It localises to the postsynaptic cell membrane. It is found in the cell membrane. Its function is as follows. Alpha subunit of nicotinic acetylcholine receptor (nAChR). Probably acts in cholinergic motoneurons to regulate presynaptic neurotransmitter release, thereby ensuring normal level of excitation of cholinergic motoneurons during locomotion. Involved in nAChR sensitivity to nicotine. The protein is Acetylcholine receptor subunit alpha-type unc-38 (unc-38) of Caenorhabditis elegans.